We begin with the raw amino-acid sequence, 477 residues long: Endoglucanase A (477 aa).

An N-terminal signal peptide occupies residues 1-32 (MKNVKKRVGVVLLILAVLGVYMLAMPANTVSA). E95 functions as the Proton donor in the catalytic mechanism. Residue D152 is the Nucleophile of the active site. One can recognise a Dockerin domain in the interval 411-477 (PQVVYGDVNG…LIKSIPHLPY (67 aa)).

Belongs to the glycosyl hydrolase 8 (cellulase D) family.

The catalysed reaction is Endohydrolysis of (1-&gt;4)-beta-D-glucosidic linkages in cellulose, lichenin and cereal beta-D-glucans.. Its function is as follows. This enzyme catalyzes the endohydrolysis of 1,4-beta-glucosidic linkages in cellulose, lichenin and cereal beta-D-glucans. The sequence is that of Endoglucanase A (celA) from Acetivibrio thermocellus (strain ATCC 27405 / DSM 1237 / JCM 9322 / NBRC 103400 / NCIMB 10682 / NRRL B-4536 / VPI 7372) (Clostridium thermocellum).